A 279-amino-acid polypeptide reads, in one-letter code: NADPH-dependent 7-cyano-7-deazaguanine reductase (279 aa).

Position 86 to 88 (isoleucine 86 to serine 88) interacts with substrate. Serine 88–lysine 89 contacts NADPH. The active-site Thioimide intermediate is the cysteine 187. Residue aspartate 194 is the Proton donor of the active site. Substrate is bound at residue histidine 226–glutamate 227. Arginine 255 to glycine 256 contributes to the NADPH binding site.

Belongs to the GTP cyclohydrolase I family. QueF type 2 subfamily. In terms of assembly, homodimer.

Its subcellular location is the cytoplasm. It carries out the reaction 7-aminomethyl-7-carbaguanine + 2 NADP(+) = 7-cyano-7-deazaguanine + 2 NADPH + 3 H(+). It functions in the pathway tRNA modification; tRNA-queuosine biosynthesis. Catalyzes the NADPH-dependent reduction of 7-cyano-7-deazaguanine (preQ0) to 7-aminomethyl-7-deazaguanine (preQ1). The protein is NADPH-dependent 7-cyano-7-deazaguanine reductase of Haemophilus influenzae (strain PittEE).